Consider the following 233-residue polypeptide: Glycolipid transfer protein 3 (233 aa).

Asp79, Asn83, Trp126, and His165 together coordinate a ganglioside GM3 (d18:1(4E)).

The protein belongs to the GLTP family.

In terms of biological role, may be involved in glycolipids transfer. This chain is Glycolipid transfer protein 3, found in Arabidopsis thaliana (Mouse-ear cress).